Reading from the N-terminus, the 757-residue chain is Alcohol dehydrogenase (quinone), dehydrogenase subunit (757 aa).

An N-terminal signal peptide occupies residues 1–34 (MTSGLLTPIKVTKKRLLSCAAALAFSAAVPVAFA). Gln-35 carries the post-translational modification Pyrrolidone carboxylic acid. Residue Glu-95 participates in pyrroloquinoline quinone binding. Residues Cys-141 and Cys-142 are joined by a disulfide bond. Position 147 (Arg-147) interacts with pyrroloquinoline quinone. Glu-215 provides a ligand contact to Ca(2+). Thr-277 lines the pyrroloquinoline quinone pocket. Ca(2+) contacts are provided by Asn-297 and Asp-342. Asp-342 functions as the Proton acceptor in the catalytic mechanism. Positions 369 and 588 each coordinate pyrroloquinoline quinone. One can recognise a Cytochrome c domain in the interval 640–719 (ARQKDGYFMY…DIRNFIVKRA (80 aa)). Residues Cys-653, Cys-656, His-657, and Met-696 each coordinate heme c. Residues 726 to 757 (EVKARENSTGVPNDQFLNVPQSTADVPTADHP) form a disordered region. Residues 732-750 (NSTGVPNDQFLNVPQSTAD) are compositionally biased toward polar residues.

The protein belongs to the bacterial PQQ dehydrogenase family. As to quaternary structure, the alcohol dehydrogenase multicomponent enzyme system is composed of a dehydrogenase subunit I (AdhA), a cytochrome c subunit II (AdhB) and a subunit III (AdhS). Pyrroloquinoline quinone serves as cofactor. It depends on Ca(2+) as a cofactor. Requires heme c as cofactor.

It localises to the cell membrane. The catalysed reaction is ethanol + a ubiquinone = a ubiquinol + acetaldehyde. With respect to regulation, 2,6-dichloro-4-dicyanovinylphenol (PC16) and antimycin A inhibit ubiquinol oxidation activity more selectively than the ubiquinone reductase activity. Dehydrogenase component of the alcohol dehydrogenase multicomponent enzyme system which is involved in the production of acetic acid and in the ethanol oxidase respiratory chain. Quinohemoprotein alcohol dehydrogenase (ADH) catalyzes the oxidation of ethanol to acetaldehyde by transferring electrons to the ubiquinone embedded in the membrane phospholipids. The electrons transfer from ethanol to membranous ubiquinone occurs from pyrroloquinoline quinone (PQQ) to one heme c in subunit I (AdhA), and finally to two heme c in subunit II (AdhB). Besides ubiquinone reduction, ADH also has a ubiquinol (QH2) oxidation reaction which mediates electron transfer from ubiquinol to the non-energy generating bypass oxidase system. The electrons transfer occurs from ubiquinol (QH2) to the additional heme c within subunit II (AdhB). Also able to use quinone analogs such as 2,3-dimethoxy-5-methyl-6-n-decyl-1,4-benzoquinone (DB) and 2,3-dimethoxy-5-methyl-6-n-pentyl-1,4-benzoquinone (PB). In Gluconobacter oxydans (strain 621H) (Gluconobacter suboxydans), this protein is Alcohol dehydrogenase (quinone), dehydrogenase subunit.